Reading from the N-terminus, the 132-residue chain is Sec-independent protein translocase protein TatB (132 aa).

A helical transmembrane segment spans residues 2 to 22 (FDGIGFMELLLIGILGLVVLG). The disordered stretch occupies residues 68 to 132 (ENQGLKDLSP…VSANPDKSNR (65 aa)). The segment covering 102–122 (TPSASSSAPSESTPSEAPTAE) has biased composition (low complexity).

This sequence belongs to the TatB family. As to quaternary structure, the Tat system comprises two distinct complexes: a TatABC complex, containing multiple copies of TatA, TatB and TatC subunits, and a separate TatA complex, containing only TatA subunits. Substrates initially bind to the TatABC complex, which probably triggers association of the separate TatA complex to form the active translocon.

Its subcellular location is the cell inner membrane. Its function is as follows. Part of the twin-arginine translocation (Tat) system that transports large folded proteins containing a characteristic twin-arginine motif in their signal peptide across membranes. Together with TatC, TatB is part of a receptor directly interacting with Tat signal peptides. TatB may form an oligomeric binding site that transiently accommodates folded Tat precursor proteins before their translocation. The sequence is that of Sec-independent protein translocase protein TatB from Shewanella woodyi (strain ATCC 51908 / MS32).